We begin with the raw amino-acid sequence, 237 residues long: Urease accessory protein UreF (237 aa).

It belongs to the UreF family. UreD, UreF and UreG form a complex that acts as a GTP-hydrolysis-dependent molecular chaperone, activating the urease apoprotein by helping to assemble the nickel containing metallocenter of UreC. The UreE protein probably delivers the nickel.

The protein resides in the cytoplasm. Functionally, required for maturation of urease via the functional incorporation of the urease nickel metallocenter. This Rhodopseudomonas palustris (strain HaA2) protein is Urease accessory protein UreF.